Consider the following 434-residue polypeptide: Trigger factor (434 aa).

A PPIase FKBP-type domain is found at glycine 163 to proline 248.

This sequence belongs to the FKBP-type PPIase family. Tig subfamily.

The protein localises to the cytoplasm. It catalyses the reaction [protein]-peptidylproline (omega=180) = [protein]-peptidylproline (omega=0). Involved in protein export. Acts as a chaperone by maintaining the newly synthesized protein in an open conformation. Functions as a peptidyl-prolyl cis-trans isomerase. In Methylibium petroleiphilum (strain ATCC BAA-1232 / LMG 22953 / PM1), this protein is Trigger factor.